The following is a 309-amino-acid chain: MKRKIIVGSRRSKLALTQSNWVIKKLKENYPEIDFEIKEIVTKGDRILDVTLSKVGGKGLFVSEVEQALSDEVIDFAVHSMKDVPSSLKDGLVIGAIPKRESPLDCFVFNEVSTLDDLPKGAVIGTSSLRRAAQLLKHRPDFVVKPIRGNIDTRLQKLHAENFDAIILAKAGLARMGWLENTSLKLEDISPELCLPAVGQGALAIECRETDLQICDMLASIHHEETGICVEAERVFLKKLNGGCEIPIAGFATKTGDSVHFKGLVGNADGSIILESERTGASPAEIGNQVAEELLSEGADTIIKELRNI.

The residue at position 244 (C244) is an S-(dipyrrolylmethanemethyl)cysteine.

This sequence belongs to the HMBS family. Monomer. Dipyrromethane is required as a cofactor.

It carries out the reaction 4 porphobilinogen + H2O = hydroxymethylbilane + 4 NH4(+). The protein operates within porphyrin-containing compound metabolism; protoporphyrin-IX biosynthesis; coproporphyrinogen-III from 5-aminolevulinate: step 2/4. Tetrapolymerization of the monopyrrole PBG into the hydroxymethylbilane pre-uroporphyrinogen in several discrete steps. In Listeria innocua serovar 6a (strain ATCC BAA-680 / CLIP 11262), this protein is Porphobilinogen deaminase.